The sequence spans 698 residues: 4-hydroxybutyrate--CoA ligase [ADP-forming] (698 aa).

The ATP-grasp domain maps to 491–544 (QEVLKAYGLPLPKSTLAKNEAEAVKAAKKIGYPVVMKIASPQIIHKSDAGGVKV). 517-544 (AKKIGYPVVMKIASPQIIHKSDAGGVKV) contacts ATP.

The protein in the N-terminal section; belongs to the acetate CoA ligase alpha subunit family. This sequence in the C-terminal section; belongs to the acetate CoA ligase beta subunit family. Requires Mg(2+) as cofactor. Mn(2+) is required as a cofactor.

It catalyses the reaction 4-hydroxybutanoate + ATP + CoA = 4-hydroxybutanoyl-CoA + ADP + phosphate. Involved in thaumarchaeal hydroxypropionate/hydroxybutyrate (HP/HB) cycle, a modified version of the autotrophic HP/HB cycle of Crenarchaeota. Catalyzes the formation of 4-hydroxybutyryl-CoA, ADP and phosphate from 4-hydroxybutyrate, coenzyme A (CoA) and ATP. Can also use acetate, propionate and butyrate, with poor catalytic efficiency. The polypeptide is 4-hydroxybutyrate--CoA ligase [ADP-forming] (Nitrosopumilus maritimus (strain SCM1)).